The sequence spans 112 residues: HLVSLQVYHYLHCINALRRAAYQHVYGAPTKEHLNHLDHCIDMLRQAAQCQSDLTPMLYFNPENDPNTMLIKSHQHSCRRFDLVNEWAMARSQCKGNTTCAIEVGKQVGGEM.

Short sequence motifs (HXXHC) lie at residues His-9 to Cys-13 and His-36 to Cys-40.

This sequence belongs to the ustYa family.

It functions in the pathway mycotoxin biosynthesis. UstYa family oxidase, part of the gene cluster that mediates the biosynthesis of the secondary metabolite victorin, the molecular basis for Victoria blight of oats. Within the pathway, vicYb catalyzes the oxidative cyclization of the core peptide. The pathway starts with the processing of the precursor vicA1 by several endopeptidases including kexin proteases as well as the cluster-specific S28 family peptidases vicPa and vicPb to produce 7 identical copies of the hexapeptide Gly-Leu-Lys-Leu-Ala-Phe. After being excised from the precursor peptide, the core peptides are cyclized and modified post-translationally by enzymes encoded within the gene cluster. The ustYa family oxidase vicYb is required for the formation of the macrocycle in victorin and the copper amine oxidases (CAOs) vicK1 and vicK2 are responsible for converting victorin to the active form by oxidizing the N-terminal glycyl residue in the peptides to glyoxylate. Relaxed substrate specificity of enzymes in the victorin biosynthetic pathway results in a metabolic grid that produces a set of analogs including victorinines B, C, E or HV-toxin M. This Bipolaris victoriae (strain FI3) (Victoria blight of oats agent) protein is UstYa family oxidase VicYb.